The sequence spans 296 residues: D-alanine--D-alanine ligase (296 aa).

In terms of domain architecture, ATP-grasp spans 99-292 (TYRVLDGYVN…FEELVDAIIQ (194 aa)). 125–176 (GFPCVIKPRKEGSSIGVHICDNSNQLYNDLSEELKKYNEMMIQRYIEGRELT) provides a ligand contact to ATP. Mg(2+)-binding residues include Asp-247, Glu-259, and Asn-261.

It belongs to the D-alanine--D-alanine ligase family. Mg(2+) is required as a cofactor. The cofactor is Mn(2+).

Its subcellular location is the cytoplasm. The catalysed reaction is 2 D-alanine + ATP = D-alanyl-D-alanine + ADP + phosphate + H(+). The protein operates within cell wall biogenesis; peptidoglycan biosynthesis. In terms of biological role, cell wall formation. The protein is D-alanine--D-alanine ligase of Pseudothermotoga lettingae (strain ATCC BAA-301 / DSM 14385 / NBRC 107922 / TMO) (Thermotoga lettingae).